The following is a 307-amino-acid chain: Elongation factor Ts (307 aa).

Residues 79–82 (TDFV) are involved in Mg(2+) ion dislocation from EF-Tu.

The protein belongs to the EF-Ts family.

It localises to the cytoplasm. Its function is as follows. Associates with the EF-Tu.GDP complex and induces the exchange of GDP to GTP. It remains bound to the aminoacyl-tRNA.EF-Tu.GTP complex up to the GTP hydrolysis stage on the ribosome. This Sinorhizobium fredii (strain NBRC 101917 / NGR234) protein is Elongation factor Ts.